A 491-amino-acid polypeptide reads, in one-letter code: Serine/threonine-protein kinase 3 (491 aa).

Position 1 is an N-acetylmethionine (Met1). Ser15 is modified (phosphoserine; by PLK1). Positions 27 to 278 (FDVLEKLGEG…ATQLLQHPFI (252 aa)) constitute a Protein kinase domain. Residues 33–41 (LGEGSYGSV) and Lys56 contribute to the ATP site. At Thr117 the chain carries Phosphothreonine; by PKB/AKT1. Asp146 functions as the Proton acceptor in the catalytic mechanism. Residues Asn151 and Asp164 each contribute to the Mg(2+) site. Residues Thr174 and Thr180 each carry the phosphothreonine; by autocatalysis modification. A coiled-coil region spans residues 287–328 (LRDLITEAMEIKAKRHEEQQRELEEEEENSDEDELDSHTMVK). Residues 301-327 (RHEEQQRELEEEEENSDEDELDSHTMV) are disordered. Acidic residues predominate over residues 309-321 (LEEEEENSDEDEL). Ser316 carries the post-translational modification Phosphoserine. Thr336 and Thr378 each carry phosphothreonine; by autocatalysis. A disordered region spans residues 370–392 (EDEEEEDGTMKRNATSPQVQRPS). The segment covering 381 to 390 (RNATSPQVQR) has biased composition (polar residues). Thr384 is modified (phosphothreonine; by PKB/AKT1). Phosphoserine occurs at positions 385 and 444. In terms of domain architecture, SARAH spans 437–484 (FDFLKNLSLEELQMRLKALDPMMEREIEELRQRYTAKRQPILDAMDAK). A coiled-coil region spans residues 442 to 475 (NLSLEELQMRLKALDPMMEREIEELRQRYTAKRQ).

The protein belongs to the protein kinase superfamily. STE Ser/Thr protein kinase family. STE20 subfamily. Homodimer; mediated via the coiled-coil region. Interacts with NORE1, which inhibits autoactivation. Interacts with and stabilizes SAV1. Interacts with RAF1, which prevents dimerization and phosphorylation. Interacts with RASSF1. Interacts (via SARAH domain) with isoform 1 of NEK2. Interacts with ESR1 only in the presence of SAV1. Interacts with PKB/AKT1. Forms a tripartite complex with MOBKL1B and STK38. Interacts with RASSF2 (via SARAH domain). Interacts with DLG5 (via PDZ domain 3). Interacts with LATS1; this interaction is inhibited in the presence of DLG5. Interacts with MARK3 in the presence of DLG5. Interacts with RASSF5; this interaction inhibits STK3 autoactivation through heterodimerization. Interacts (when phosphorylated) with SLMAP (via FHA domain); the interaction associates STK3 with the STRIPAK complex. Mg(2+) serves as cofactor. Post-translationally, autophosphorylated on two residues Thr-174 and Thr-180, leading to activation. Phosphorylation at Thr-117 and Thr-384 by PKB/AKT1, leads to inhibition of its: cleavage, kinase activity, autophosphorylation at Thr-180, binding to RASSF1 and nuclear translocation, and increase in its binding to RAF1. Phosphorylated at Ser-15 by PLK1, leading to activation. When autophosphorylated at Thr-180, recruits STRIPAK complex and promotes PP2A-mediated dephosphorylation and inactivation of STK3. In terms of processing, proteolytically cleaved by caspase-3 during apoptosis. Proteolytic cleavage results in kinase activation and nuclear translocation of the truncated form (MST1/N). Ubiquitinated by TRIM69; leading to its redistribution to the perinuclear cytoskeleton, where it is phosphorylated by PLK1 and subsequently activated. Expressed at high levels in adult kidney, skeletal and placenta tissues and at very low levels in adult heart, lung and brain tissues.

It localises to the cytoplasm. The protein resides in the nucleus. The protein localises to the cytoskeleton. Its subcellular location is the microtubule organizing center. It is found in the centrosome. It carries out the reaction L-seryl-[protein] + ATP = O-phospho-L-seryl-[protein] + ADP + H(+). It catalyses the reaction L-threonyl-[protein] + ATP = O-phospho-L-threonyl-[protein] + ADP + H(+). Inhibited by the C-terminal non-catalytic region. Activated by caspase-cleavage. Full activation also requires homodimerization and autophosphorylation of Thr-180, which are inhibited by the proto-oncogene product RAF1. Activated by RASSF1 which acts by preventing its dephosphorylation. When autophosphorylated at Thr-180, recruits STRIPAK complex and promotes PP2A-mediated dephosphorylation and inactivation of STK3. Stress-activated, pro-apoptotic kinase which, following caspase-cleavage, enters the nucleus and induces chromatin condensation followed by internucleosomal DNA fragmentation. Key component of the Hippo signaling pathway which plays a pivotal role in organ size control and tumor suppression by restricting proliferation and promoting apoptosis. The core of this pathway is composed of a kinase cascade wherein STK3/MST2 and STK4/MST1, in complex with its regulatory protein SAV1, phosphorylates and activates LATS1/2 in complex with its regulatory protein MOB1, which in turn phosphorylates and inactivates YAP1 oncoprotein and WWTR1/TAZ. Phosphorylation of YAP1 by LATS2 inhibits its translocation into the nucleus to regulate cellular genes important for cell proliferation, cell death, and cell migration. STK3/MST2 and STK4/MST1 are required to repress proliferation of mature hepatocytes, to prevent activation of facultative adult liver stem cells (oval cells), and to inhibit tumor formation. Phosphorylates NKX2-1. Phosphorylates NEK2 and plays a role in centrosome disjunction by regulating the localization of NEK2 to centrosome, and its ability to phosphorylate CROCC and CEP250. In conjunction with SAV1, activates the transcriptional activity of ESR1 through the modulation of its phosphorylation. Positively regulates RAF1 activation via suppression of the inhibitory phosphorylation of RAF1 on 'Ser-259'. Phosphorylates MOBKL1A and RASSF2. Phosphorylates MOBKL1B on 'Thr-74'. Acts cooperatively with MOBKL1B to activate STK38. The sequence is that of Serine/threonine-protein kinase 3 from Homo sapiens (Human).